An 83-amino-acid chain; its full sequence is Normal mucosa of esophagus-specific gene 1 protein (83 aa).

This sequence belongs to the complex I NDUFA4 subunit family.

Its subcellular location is the nucleus. The chain is Normal mucosa of esophagus-specific gene 1 protein (Nmes1) from Rattus norvegicus (Rat).